The following is a 466-amino-acid chain: GTP cyclohydrolase 1 (466 aa).

Positions 342, 345, and 416 each coordinate Zn(2+).

This sequence belongs to the GTP cyclohydrolase I family. As to quaternary structure, homodimer.

The catalysed reaction is GTP + H2O = 7,8-dihydroneopterin 3'-triphosphate + formate + H(+). The protein operates within cofactor biosynthesis; 7,8-dihydroneopterin triphosphate biosynthesis; 7,8-dihydroneopterin triphosphate from GTP: step 1/1. Its function is as follows. GTP cyclohydrolase 1 is the first enzyme in the biosynthetic pathway leading to folic acid. This is GTP cyclohydrolase 1 (GCH1) from Arabidopsis thaliana (Mouse-ear cress).